Reading from the N-terminus, the 1292-residue chain is DNA-directed RNA polymerase subunit beta' (1292 aa).

Cys-70, Cys-72, Cys-85, and Cys-88 together coordinate Zn(2+). Mg(2+) contacts are provided by Asp-532, Asp-534, and Asp-536. Cys-911, Cys-987, Cys-994, and Cys-997 together coordinate Zn(2+).

This sequence belongs to the RNA polymerase beta' chain family. In terms of assembly, the RNAP catalytic core consists of 2 alpha, 1 beta, 1 beta' and 1 omega subunit. When a sigma factor is associated with the core the holoenzyme is formed, which can initiate transcription. Mg(2+) is required as a cofactor. It depends on Zn(2+) as a cofactor.

The enzyme catalyses RNA(n) + a ribonucleoside 5'-triphosphate = RNA(n+1) + diphosphate. Functionally, DNA-dependent RNA polymerase catalyzes the transcription of DNA into RNA using the four ribonucleoside triphosphates as substrates. In Mycoplasma genitalium (strain ATCC 33530 / DSM 19775 / NCTC 10195 / G37) (Mycoplasmoides genitalium), this protein is DNA-directed RNA polymerase subunit beta'.